A 1012-amino-acid chain; its full sequence is Tolloid-like protein 2 (1012 aa).

The first 21 residues, 1 to 21, serve as a signal peptide directing secretion; the sequence is MPLATTLGTLVLLLLLPLPRG. A propeptide spanning residues 22–146 is cleaved from the precursor; that stretch reads AEVTGDHSNV…AKTFSARVRR (125 aa). The segment at 83–135 is disordered; the sequence is KPSIDKPGHDTGGLEETSARWPNDTASNASIQAPRKDGKDATTFLPNPGTSNT. Residues 126–135 are compositionally biased toward polar residues; the sequence is FLPNPGTSNT. The region spanning 146–346 is the Peptidase M12A domain; sequence RATTSRTERI…AQARKLYKCP (201 aa). Asn168 carries N-linked (GlcNAc...) asparagine glycosylation. Disulfide bonds link Cys189-Cys345, Cys209-Cys231, Cys211-Cys212, and Cys348-Cys374. Residue His239 coordinates Zn(2+). Residue Glu240 is part of the active site. Zn(2+) is bound by residues His243 and His249. 2 consecutive CUB domains span residues 348-460 and 461-573; these read CGET…YEAM and CGGD…FFKE. N-linked (GlcNAc...) asparagine glycosylation is found at Asn358 and Asn389. Cystine bridges form between Cys401–Cys423, Cys461–Cys487, Cys514–Cys536, Cys577–Cys589, Cys585–Cys598, Cys600–Cys613, Cys617–Cys643, Cys670–Cys692, Cys733–Cys744, Cys740–Cys753, Cys755–Cys768, and Cys773–Cys799. Positions 573-614 constitute an EGF-like 1; calcium-binding domain; sequence EVDECSWPDHGGCEQRCVNTLGSYTCACDPGYELAADKKTCE. Residues 617–729 form the CUB 3 domain; it reads CGGFITKLNG…RGFRAHFFSD (113 aa). N-linked (GlcNAc...) asparagine glycosylation is present at Asn625. Residues 729–769 form the EGF-like 2; calcium-binding domain; it reads DKDECAKDNGGCQQECVNTFGSYLCRCRNGYRLHENGHDCK. 2 CUB domains span residues 773–885 and 886–1002; these read CAYK…HSTE and CGGR…YTST. Asn802 carries an N-linked (GlcNAc...) asparagine glycan. 3 disulfide bridges follow: Cys826–Cys848, Cys886–Cys916, and Cys943–Cys965. Arg960 and Arg963 each carry omega-N-methylarginine.

Requires Zn(2+) as cofactor.

The protein resides in the secreted. In terms of biological role, protease which specifically processes pro-lysyl oxidase. Required for the embryonic development. Predominant protease, which in the development, influences dorsal-ventral patterning and skeletogenesis. This is Tolloid-like protein 2 (Tll2) from Mus musculus (Mouse).